Here is a 1067-residue protein sequence, read N- to C-terminus: Probable importin-5 homolog (1067 aa).

24 HEAT repeats span residues 3-34 (LQPI…YKNH), 42-75 (SFIV…SGNI), 93-120 (FAVR…QLVP), 125-152 (PEIL…LIGA), 164-197 (APHF…STFI), 206-243 (VFKP…IAQY), 251-286 (NFDM…FAEF), 295-347 (LYLE…HCVS), 349-381 (GLWE…SSIS), 385-425 (EKQI…ASYL), 427-466 (REMQ…LDEI), 468-508 (PNRV…VDGI), 510-553 (EEFT…GLAV), 555-596 (KKVF…AQCL), 598-658 (EDFI…AMEL), 661-703 (HLFP…SKQH), 718-757 (FTSR…MDIG), 763-826 (ADRI…CIQF), 832-869 (PYIA…ENGG), 876-909 (YPHI…AAEN), 917-960 (FLME…ITNL), 969-999 (PQTI…TLIR), 1008-1040 (QQYI…LALR), and 1041-1064 (SQES…LANF).

This sequence belongs to the importin beta family. Importin beta-3 subfamily.

The protein resides in the cytoplasm. Its subcellular location is the nucleus. Functions in nuclear protein import as nuclear transport receptor. Serves as receptor for nuclear localization signals (NLS) in cargo substrates. The polypeptide is Probable importin-5 homolog (Dictyostelium discoideum (Social amoeba)).